Here is a 338-residue protein sequence, read N- to C-terminus: Large ribosomal subunit protein uL3 (338 aa).

2 disordered regions span residues 230-256 (HRKGHRRTGTIGPQAPALMFTQPRPGQ) and 315-338 (PARPPRRAPPTTEPQVVWVSSQQP).

This sequence belongs to the universal ribosomal protein uL3 family. Part of the 50S ribosomal subunit. Forms a cluster with proteins L14 and L24e.

One of the primary rRNA binding proteins, it binds directly near the 3'-end of the 23S rRNA, where it nucleates assembly of the 50S subunit. This is Large ribosomal subunit protein uL3 from Pyrobaculum arsenaticum (strain DSM 13514 / JCM 11321 / PZ6).